A 551-amino-acid chain; its full sequence is Adenylyl cyclase-associated protein (551 aa).

The segment at 34 to 55 (SGHKPLPNMHRPSRDSNSQTHN) is disordered. At Ser92 the chain carries Phosphoserine. Thr96 is modified (phosphothreonine). The segment covering 288–300 (SASKTQAPSSGDS) has biased composition (polar residues). Disordered regions lie at residues 288-333 (SASK…NKGD) and 348-395 (TSGL…PVKP). Positions 305-315 (LPPPPPPPPPS) are enriched in pro residues. Positions 352–361 (RKVDKSEMTH) are enriched in basic and acidic residues. The C-CAP/cofactor C-like domain maps to 395–529 (PPRIELENTK…EEGDYAERAV (135 aa)).

Belongs to the CAP family.

Functionally, the N-terminal domain binds to adenylyl cyclase, thereby enabling adenylyl cyclase to be activated by upstream regulatory signals, such as Ras. The C-terminal domain is required for normal cellular morphology and growth control. This is Adenylyl cyclase-associated protein (cap1) from Schizosaccharomyces pombe (strain 972 / ATCC 24843) (Fission yeast).